A 66-amino-acid polypeptide reads, in one-letter code: Large ribosomal subunit protein uL29 (66 aa).

This sequence belongs to the universal ribosomal protein uL29 family.

The protein is Large ribosomal subunit protein uL29 of Rhizobium etli (strain ATCC 51251 / DSM 11541 / JCM 21823 / NBRC 15573 / CFN 42).